The following is a 587-amino-acid chain: MKDIYNQILKLQLQIKYHNYMYHTLDSPIISDILYDELYNKLLQLEKLYFKKKSLDKKIKLLDQVGAKKLHIFTEFFHKIPMLSLRSINNISDFDLFDKKIKEYFKHINVITYFCDFKFDGLAVNLFYKNGILISASTRGNGSVGENITKNILMISSIPKKIAGSNIPKKIEIRGEIFMRKSDFFILNQSCKLSGKKEFSNPRNAAAGSVRQLNPEIVKKRKLNFFVYGFGLFDYNKKIDSHYQRLLQIKKWGFPLYKNYCVCKNKKEVIHFYHYANKIRSQLDFEIDGIVIKLDSIKLQNNLGCIEKYPKWAIALKFFSLDKETKIFKISFKVGRTGIITPVAYFFPINLFGVSISKASLYNIKTIKLLDIRLHDYVTVYRAGDVIPKIRNVLIHKRNKYTQKIIIPTYCPSCCTKLIFSDDLKTCYCPASFSCFSQNVKRLIYFSSKNGLNFKGLGKKNIIKLINYGYLYTPIDFFSLTVKKLKNIFRMGDKLSEKIIKNIAFSKRVSLDKFICSLGIFGVGTSIAKRLAYYYRSVEKFFNTNYDTLSKIDHIGYNISNAIISFLKNKSNRSIILKLIRILNIFI.

Residues 32-36 (DILYD), 84-85 (SL), and Asp-116 contribute to the NAD(+) site. Lys-118 functions as the N6-AMP-lysine intermediate in the catalytic mechanism. Residues Arg-139, Glu-176, Lys-293, and Lys-317 each contribute to the NAD(+) site. Positions 411, 414, 429, and 435 each coordinate Zn(2+).

Belongs to the NAD-dependent DNA ligase family. LigA subfamily. It depends on Mg(2+) as a cofactor. The cofactor is Mn(2+).

The enzyme catalyses NAD(+) + (deoxyribonucleotide)n-3'-hydroxyl + 5'-phospho-(deoxyribonucleotide)m = (deoxyribonucleotide)n+m + AMP + beta-nicotinamide D-nucleotide.. Functionally, DNA ligase that catalyzes the formation of phosphodiester linkages between 5'-phosphoryl and 3'-hydroxyl groups in double-stranded DNA using NAD as a coenzyme and as the energy source for the reaction. It is essential for DNA replication and repair of damaged DNA. This Buchnera aphidicola subsp. Cinara cedri (strain Cc) protein is DNA ligase.